The primary structure comprises 101 residues: CYC02 protein (101 aa).

The 1; approximate repeat unit spans residues 42–64 (DAVCHHGCCRWFHHRCVRCCRSA). Positions 42–101 (DAVCHHGCCRWFHHRCVRCCRSAEEVSVSDTENNAAADAHCRHGCCRWFHGRCIRCCPSA) are 2 X approximate repeats. Residues 79 to 101 (DAHCRHGCCRWFHGRCIRCCPSA) form a 2; approximate repeat.

Belongs to the GRP family.

Functionally, may be involved in the control of the cell cycle at the G1/S start transition. The polypeptide is CYC02 protein (CYC02) (Catharanthus roseus (Madagascar periwinkle)).